The following is a 360-amino-acid chain: Dihydroorotate dehydrogenase (quinone) (360 aa).

FMN-binding positions include Ala-60–Lys-64 and Thr-84. A substrate-binding site is contributed by Lys-64. Asn-109–Phe-113 contacts substrate. FMN contacts are provided by Asn-137 and Asn-168. Substrate is bound at residue Asn-168. The active-site Nucleophile is Ser-171. Asn-173 is a binding site for substrate. Lys-213 and Ser-241 together coordinate FMN. Asn-242–Thr-243 lines the substrate pocket. FMN contacts are provided by residues Gly-264, Gly-293, and Tyr-314–Ser-315.

The protein belongs to the dihydroorotate dehydrogenase family. Type 2 subfamily. As to quaternary structure, monomer. Requires FMN as cofactor.

Its subcellular location is the cell membrane. The catalysed reaction is (S)-dihydroorotate + a quinone = orotate + a quinol. Its pathway is pyrimidine metabolism; UMP biosynthesis via de novo pathway; orotate from (S)-dihydroorotate (quinone route): step 1/1. Catalyzes the conversion of dihydroorotate to orotate with quinone as electron acceptor. The protein is Dihydroorotate dehydrogenase (quinone) of Bartonella tribocorum (strain CIP 105476 / IBS 506).